A 180-amino-acid chain; its full sequence is Bifunctional protein PyrR (180 aa).

Substrate contacts are provided by residues 39-40, 103-111, and Arg-136; these read TR and DDVLYTGRT. The PRPP-binding motif lies at 99 to 111; the sequence is VILIDDVLYTGRT.

This sequence belongs to the purine/pyrimidine phosphoribosyltransferase family. PyrR subfamily. In terms of assembly, homodimer and homohexamer; in equilibrium.

The catalysed reaction is UMP + diphosphate = 5-phospho-alpha-D-ribose 1-diphosphate + uracil. Functionally, regulates transcriptional attenuation of the pyrimidine nucleotide (pyr) operon by binding in a uridine-dependent manner to specific sites on pyr mRNA. This disrupts an antiterminator hairpin in the RNA and favors formation of a downstream transcription terminator, leading to a reduced expression of downstream genes. Also displays a weak uracil phosphoribosyltransferase activity which is not physiologically significant. The sequence is that of Bifunctional protein PyrR from Halalkalibacterium halodurans (strain ATCC BAA-125 / DSM 18197 / FERM 7344 / JCM 9153 / C-125) (Bacillus halodurans).